Consider the following 101-residue polypeptide: Small ribosomal subunit protein uS14 (101 aa).

This sequence belongs to the universal ribosomal protein uS14 family. As to quaternary structure, part of the 30S ribosomal subunit. Contacts proteins S3 and S10.

Functionally, binds 16S rRNA, required for the assembly of 30S particles and may also be responsible for determining the conformation of the 16S rRNA at the A site. The sequence is that of Small ribosomal subunit protein uS14 from Neisseria gonorrhoeae (strain ATCC 700825 / FA 1090).